A 274-amino-acid polypeptide reads, in one-letter code: Prothoracicostatic peptide (274 aa).

The first 19 residues, 1 to 19 (MRWCLFALWVFGVATVVTA), serve as a signal peptide directing secretion. A propeptide spanning residues 20–67 (AEEPHHDAAPQTDNEVDLTEDDKRAWSSLHSGWAKRAWQDMSSAWGKR) is cleaved from the precursor. A Tryptophan amide modification is found at tryptophan 76. A propeptide spanning residues 77-91 (GKRGWQDLNSAWGKR) is cleaved from the precursor. A Tryptophan amide modification is found at tryptophan 100. Positions 101-136 (GKRGWQDLNSAWGKRDDDEAMEKKSWQDLNSVWGKR) are excised as a propeptide. Position 145 is a tryptophan amide (tryptophan 145). Residues 146–148 (GKR) constitute a propeptide that is removed on maturation. At tryptophan 157 the chain carries Tryptophan amide. The propeptide occupies 158–172 (GKRGWNDISSVWGKR). Position 181 is a tryptophan amide (tryptophan 181). Positions 182 to 274 (GKRAWQDMSS…NEHSATTNEA (93 aa)) are excised as a propeptide.

It localises to the secreted. In terms of biological role, inhibits ecdysteroid biosynthesis in the prothoracic gland of fifth instar larvae, with maximum inhibition during the spinning stage. When administered to day 8 fifth instar larvae it produces a significant delay in the commencement spinning behavior. This chain is Prothoracicostatic peptide, found in Bombyx mori (Silk moth).